Here is a 37-residue protein sequence, read N- to C-terminus: Large ribosomal subunit protein bL36c (37 aa).

It belongs to the bacterial ribosomal protein bL36 family.

Its subcellular location is the plastid. It localises to the chloroplast. This chain is Large ribosomal subunit protein bL36c, found in Tetradesmus obliquus (Green alga).